Consider the following 131-residue polypeptide: Small ribosomal subunit protein uS11 (131 aa).

Positions 1–15 (MAAKTVKKTRRRKER) are enriched in basic residues. Residues 1–23 (MAAKTVKKTRRRKERKNVEHGAA) are disordered.

It belongs to the universal ribosomal protein uS11 family. As to quaternary structure, part of the 30S ribosomal subunit. Interacts with proteins S7 and S18. Binds to IF-3.

In terms of biological role, located on the platform of the 30S subunit, it bridges several disparate RNA helices of the 16S rRNA. Forms part of the Shine-Dalgarno cleft in the 70S ribosome. The chain is Small ribosomal subunit protein uS11 from Clostridium beijerinckii (strain ATCC 51743 / NCIMB 8052) (Clostridium acetobutylicum).